We begin with the raw amino-acid sequence, 604 residues long: UvrABC system protein C (604 aa).

Positions 13-92 constitute a GIY-YIG domain; it reads ASPGVYLMKD…IKKYHPKYNV (80 aa). Residues 205–240 form the UVR domain; it reads SEIVQDLEKSIEKASKEQKFEQAGMYYRTLKLIQQA.

It belongs to the UvrC family. Interacts with UvrB in an incision complex.

The protein localises to the cytoplasm. Functionally, the UvrABC repair system catalyzes the recognition and processing of DNA lesions. UvrC both incises the 5' and 3' sides of the lesion. The N-terminal half is responsible for the 3' incision and the C-terminal half is responsible for the 5' incision. The sequence is that of UvrABC system protein C from Chlamydia abortus (strain DSM 27085 / S26/3) (Chlamydophila abortus).